A 33-amino-acid polypeptide reads, in one-letter code: Dermaseptin DS VIII-like peptide (33 aa).

The residue at position 33 (Ala-33) is an Alanine amide.

In terms of tissue distribution, expressed by the parotoid glands.

The protein resides in the secreted. Functionally, possesses a potent antimicrobial activity against bacteria, fungi and protozoa. Probably acts by disturbing membrane functions with its amphipathic structure. The chain is Dermaseptin DS VIII-like peptide from Phyllomedusa burmeisteri (Brazilian common walking leaf frog).